The chain runs to 191 residues: Glucose-6-phosphate 1-dehydrogenase (191 aa).

Ala2 carries the post-translational modification N-acetylalanine. Ser8 carries the post-translational modification Phosphoserine. Thr10 is modified (phosphothreonine). NADP(+)-binding positions include 38–45 and Tyr86; that span reads GASGDLAK. Asp101 is a binding site for D-glucose 6-phosphate. Catalysis depends on His106, which acts as the Proton acceptor. Arg163 contributes to the NADP(+) binding site. At Lys173 the chain carries N6-acetyllysine. Residues Tyr179 and Trp185 each contribute to the NADP(+) site. Tyr179 is modified (phosphotyrosine).

Belongs to the glucose-6-phosphate dehydrogenase family. Homotetramer; dimer of dimers. Interacts with SIRT2; the interaction is enhanced by H(2)O(2) treatment. Forms a ternary complex with ALDOB and TP53; this interaction is direct. ALDOB stabilizes the complex inhibiting G6PD activity and keeping oxidative pentose phosphate metabolism in check. Post-translationally, acetylated by ELP3; acetylation inhibits its homodimerization and enzyme activity. Deacetylated by SIRT2; deacetylation stimulates its enzyme activity.

The protein resides in the cytoplasm. It is found in the cytosol. It localises to the membrane. The catalysed reaction is D-glucose 6-phosphate + NADP(+) = 6-phospho-D-glucono-1,5-lactone + NADPH + H(+). It participates in carbohydrate degradation; pentose phosphate pathway; D-ribulose 5-phosphate from D-glucose 6-phosphate (oxidative stage): step 1/3. Cytosolic glucose-6-phosphate dehydrogenase that catalyzes the first and rate-limiting step of the oxidative branch within the pentose phosphate pathway/shunt, an alternative route to glycolysis for the dissimilation of carbohydrates and a major source of reducing power and metabolic intermediates for fatty acid and nucleic acid biosynthetic processes. The polypeptide is Glucose-6-phosphate 1-dehydrogenase (G6PD) (Didelphis virginiana (North American opossum)).